A 414-amino-acid polypeptide reads, in one-letter code: Cytochrome b (414 aa).

2 helical membrane-spanning segments follow: residues 40 to 60 (FFGS…VWLA) and 84 to 104 (GWLI…VIYL). Heme b is bound by residues His91 and His105. Transmembrane regions (helical) follow at residues 121–141 (LLWM…FFGY), 154–174 (QVIV…SVWV), 188–208 (FFAF…LHIV), 252–272 (LMGV…NPTM), 294–314 (IAPV…PPMY), 317–337 (QFPG…LPWL), 351–371 (IFKW…WLGI), and 378–398 (YTLL…LMPI). 2 residues coordinate heme b: His192 and His206.

The protein belongs to the cytochrome b family. In terms of assembly, the main subunits of complex b-c1 are: cytochrome b, cytochrome c1 and the Rieske protein. It depends on heme b as a cofactor.

Its subcellular location is the cell membrane. Component of the ubiquinol-cytochrome c reductase complex (complex III or cytochrome b-c1 complex), which is a respiratory chain that generates an electrochemical potential coupled to ATP synthesis. This is Cytochrome b (petB) from Allochromatium vinosum (strain ATCC 17899 / DSM 180 / NBRC 103801 / NCIMB 10441 / D) (Chromatium vinosum).